We begin with the raw amino-acid sequence, 343 residues long: MALPRITSPHAKGSNRTQQVMLQVLLATVPGILALTWLFGAGTLYNLALASLFALAFEAAILAARQRPLAFFLKDYSALVTAVLLALALPPYAPWWLTLIACGFAIVFGKQLYGGLGQNPFNPAMLGYVVVLISFPVEMTSWPAPHGVAALDGIKHILGIASLPDGWAQATALDALKVNKSLTIDELRAANPAFGHFGGAGSEAVNLAFLAGGLYLLHKRLITWHAPVGMLAALFVMSLLFWNGSGSDSNGSPLFHLLTGATMLGAFFIVTDPVSGATSNRGRLVFGIGVGVLVYVIRAWGGYPDAVAFAVLLMNLAAPTIDYYTRPRSYGHRKPNSGFKLGE.

Helical transmembrane passes span Val24 to Leu44, Tyr45 to Arg65, Leu69 to Pro91, and Ala124 to Ala144. Residue Thr171 is modified to FMN phosphoryl threonine. 5 helical membrane-spanning segments follow: residues Phe197–Leu217, Leu221–Phe241, Gly251–Thr271, Leu284–Pro304, and Asp305–Thr325.

Belongs to the NqrB/RnfD family. As to quaternary structure, the complex is composed of six subunits: RnfA, RnfB, RnfC, RnfD, RnfE and RnfG. Requires FMN as cofactor.

Its subcellular location is the cell inner membrane. Its function is as follows. Part of a membrane-bound complex that couples electron transfer with translocation of ions across the membrane. This is Ion-translocating oxidoreductase complex subunit D from Ectopseudomonas mendocina (strain ymp) (Pseudomonas mendocina).